The sequence spans 1312 residues: MGAASGQRGRWPLSPPLLMLSLLVLLLQPSPAPALDPGLQPGNFSPDEAGAQLFAESYNSSAEVVMFQSTVASWAHDTNITEENARRQEEAALVSQEFAEVWGKKAKELYESIWQNFTDSKLRRIIGSIRTLGPANLPLAQRQQYNSLLSNMSRIYSTGKVCFPNKTATCWSLDPELTNILASSRSYAKLLFAWEGWHDAVGIPLKPLYQDFTAISNEAYRQDDFSDTGAFWRSWYESPSFEESLEHIYHQLEPLYLNLHAYVRRALHRRYGDKYVNLRGPIPAHLLGDMWAQSWENIYDMVVPFPDKPNLDVTSTMVQKGWNATHMFRVSEEFFTSLGLSPMPPEFWAESMLEKPTDGREVVCHASAWDFYNRKDFRIKQCTRVTMEQLATVHHEMGHVQYYLQYKDLHVSLRRGANPGFHEAIGDVLALSVSTPAHLHKIGLLDHVTNDIESDINYLLKMALEKIAFLPFGYLVDQWRWGVFSGRTPPSRYNFDWWYLRTKYQGICPPVARNETHFDAGAKFHIPNVTPYIRYFVSFVLQFQFHQALCKEAGHQGPLHQCDIYQSAQAGAKLKQVLQAGCSRPWQEVLKDLVGSDALDAKALLEYFQPVSQWLEEQNQRNGEVLGWPENQWRPPLPDNYPEGIDLETDEAKADRFVEEYDRTAQVLLNEYAEANWQYNTNITIEGSKILLEKSTEVSNHTLKYGTRAKTFDVSNFQNSSIKRIIKKLQNLDRAVLPPKELEEYNQILLDMETTYSLSNICYTNGTCMPLEPDLTNMMATSRKYEELLWAWKSWRDKVGRAILPFFPKYVEFSNKIAKLNGYTDAGDSWRSLYESDNLEQDLEKLYQELQPLYLNLHAYVRRSLHRHYGSEYINLDGPIPAHLLGNMWAQTWSNIYDLVAPFPSAPNIDATEAMIKQGWTPRRIFKEADNFFTSLGLLPVPPEFWNKSMLEKPTDGREVVCHPSAWDFYNGKDFRIKQCTSVNMEDLVIAHHEMGHIQYFMQYKDLPVTFREGANPGFHEAIGDIMALSVSTPKHLYSLNLLSTEGSGYEYDINFLMKMALDKIAFIPFSYLIDQWRWRVFDGSITKENYNQEWWSLRLKYQGLCPPVPRSQGDFDPGSKFHVPANVPYVRYFVSFIIQFQFHEALCRAAGHTGPLHKCDIYQSKEAGKLLADAMKLGYSKPWPEAMKLITGQPNMSASAMMNYFKPLTEWLVTENRRHGETLGWPEYNWAPNTARAEGSTAESNRVNFLGLYLEPQQARVGQWVLLFLGVALLVATVGLAHRLYNIRNHHSLRRPHRGPQFGSEVELRHS.

An N-terminal signal peptide occupies residues 1–34 (MGAASGQRGRWPLSPPLLMLSLLVLLLQPSPAPA). Topologically, residues 35-1264 (LDPGLQPGNF…LEPQQARVGQ (1230 aa)) are extracellular. 2 Peptidase M2 domains span residues 45 to 629 (SPDE…LGWP) and 648 to 1227 (ETDE…LGWP). N-linked (GlcNAc...) asparagine glycans are attached at residues asparagine 59, asparagine 79, asparagine 116, asparagine 151, and asparagine 165. A disulfide bridge connects residues cysteine 162 and cysteine 170. Residue tyrosine 236 participates in chloride binding. N-linked (GlcNAc...) asparagine glycosylation is present at asparagine 323. An intrachain disulfide couples cysteine 364 to cysteine 382. Histidine 395 lines the Zn(2+) pocket. Glutamate 396 serves as the catalytic Proton acceptor 1. Residues histidine 399 and glutamate 423 each coordinate Zn(2+). The N-linked (GlcNAc...) asparagine glycan is linked to asparagine 514. Histidine 525 functions as the Proton donor 1 in the catalytic mechanism. Position 534 (arginine 534) interacts with chloride. Cysteines 550 and 562 form a disulfide. Residue asparagine 682 is glycosylated (N-linked (GlcNAc...) asparagine). Residues asparagine 700 and asparagine 719 are each glycosylated (N-linked (GlcNAc...) (complex) asparagine). A disulfide bridge links cysteine 762 with cysteine 768. Residue asparagine 765 is glycosylated (N-linked (GlcNAc...) asparagine). Chloride-binding residues include arginine 796 and tyrosine 834. Asparagine 947 is a glycosylation site (N-linked (GlcNAc...) asparagine). Cysteine 962 and cysteine 980 are oxidised to a cystine. Residue histidine 993 participates in Zn(2+) binding. Glutamate 994 serves as the catalytic Proton acceptor 2. Histidine 997 and glutamate 1021 together coordinate Zn(2+). Tryptophan 1095 and arginine 1099 together coordinate chloride. Histidine 1123 functions as the Proton donor 2 in the catalytic mechanism. Arginine 1132 contacts chloride. Cysteine 1148 and cysteine 1160 form a disulfide bridge. Asparagine 1196 carries N-linked (GlcNAc...) asparagine glycosylation. Positions 1220–1261 (HGETLGWPEYNWAPNTARAEGSTAESNRVNFLGLYLEPQQAR) are juxtamembrane stalk. A helical transmembrane segment spans residues 1265–1281 (WVLLFLGVALLVATVGL). The Cytoplasmic segment spans residues 1282 to 1312 (AHRLYNIRNHHSLRRPHRGPQFGSEVELRHS). A Phosphoserine modification is found at serine 1305.

This sequence belongs to the peptidase M2 family. As to quaternary structure, monomer and homodimer; homodimerizes following binding to an inhibitor. Interacts with calmodulin (CALM1, CALM2 or CALM3); interaction takes place in the cytoplasmic region and regulates phosphorylation and proteolytic cleavage. Requires Zn(2+) as cofactor. The cofactor is chloride. Post-translationally, produced following proteolytic cleavage by secretase enzymes that cleave the transmembrane form in the juxtamembrane stalk region upstream of the transmembrane region. Cleavage can take place at different sites of the juxtamembrane stalk region. In terms of processing, phosphorylated by CK2 on Ser-1305; which allows membrane retention. Phosphorylated on tyrosine residues on its extracellular part, promoting cleavage by secretase enzymes and formation of the soluble form (Angiotensin-converting enzyme, soluble form). Highly expressed in kidney and lung; not expressed in the liver. In the brain, expressed in the cerebral cortex, hippocampus, cerebellum and basal ganglia/brainstem. Highly expressed in dopamine receptor DRD1-expressing neurons in the dorsal striatum and the nucleus accumbens of the brain. In terms of tissue distribution, specifically expressed in spermatocytes, adult testis.

The protein localises to the cell membrane. The protein resides in the cytoplasm. It localises to the secreted. It catalyses the reaction Release of a C-terminal dipeptide, oligopeptide-|-Xaa-Yaa, when Xaa is not Pro, and Yaa is neither Asp nor Glu. Thus, conversion of angiotensin I to angiotensin II, with increase in vasoconstrictor activity, but no action on angiotensin II.. The enzyme catalyses angiotensin I + H2O = L-histidyl-L-leucine + angiotensin II. The catalysed reaction is bradykinin + H2O = L-Phe-L-Arg + bradykinin(1-7). It carries out the reaction substance P + H2O = substance P(1-9) + L-Leu-L-Met-NH2. It catalyses the reaction substance P + H2O = substance P(1-8) + Gly-L-Leu-L-Met-NH2. The enzyme catalyses substance P + H2O = L-Phe-L-Phe-Gly-L-Leu-L-Met-NH2 + substance P(1-6). The catalysed reaction is neurotensin + H2O = neurotensin(1-11) + L-isoleucyl-L-leucine. It carries out the reaction goralatide + H2O = N-acetyl-L-seryl-L-aspartate + L-lysyl-L-proline. It catalyses the reaction Met-enkephalin + H2O = L-phenylalanyl-L-methionine + L-tyrosylglycylglycine. The enzyme catalyses Leu-enkephalin + H2O = L-tyrosylglycylglycine + L-phenylalanyl-L-leucine. The catalysed reaction is Met-enkephalin-Arg-Phe + H2O = L-arginyl-L-phenylalanine + Met-enkephalin. Its activity is regulated as follows. The dipeptidyl carboxypeptidase activity is specifically inhibited by lisinopril, captopril and enalaprilat. The N-terminal catalytic domain, but not the C-terminal catalytic domain, is specifically inhibited by the phosphinic peptide RXP 407. The putative GPIase activity is nearly insensitive to captopril. Functionally, dipeptidyl carboxypeptidase that removes dipeptides from the C-terminus of a variety of circulating hormones, such as angiotensin I, bradykinin or enkephalins, thereby playing a key role in the regulation of blood pressure, electrolyte homeostasis or synaptic plasticity. Composed of two similar catalytic domains, each possessing a functional active site, with different selectivity for substrates. Plays a major role in the angiotensin-renin system that regulates blood pressure and sodium retention by the kidney by converting angiotensin I to angiotensin II, resulting in an increase of the vasoconstrictor activity of angiotensin. Also able to inactivate bradykinin, a potent vasodilator, and therefore enhance the blood pressure response. Acts as a regulator of synaptic transmission by mediating cleavage of neuropeptide hormones, such as substance P, neurotensin or enkephalins. Catalyzes degradation of different enkephalin neuropeptides (Met-enkephalin, Leu-enkephalin, Met-enkephalin-Arg-Phe and possibly Met-enkephalin-Arg-Gly-Leu). Acts as a regulator of synaptic plasticity in the nucleus accumbens of the brain by mediating cleavage of Met-enkephalin-Arg-Phe, a strong ligand of Mu-type opioid receptor OPRM1, into Met-enkephalin. Met-enkephalin-Arg-Phe cleavage by ACE decreases activation of OPRM1, leading to long-term synaptic potentiation of glutamate release. Also acts as a regulator of hematopoietic stem cell differentiation by mediating degradation of hemoregulatory peptide N-acetyl-SDKP (AcSDKP). Acts as a regulator of cannabinoid signaling pathway by mediating degradation of hemopressin, an antagonist peptide of the cannabinoid receptor CNR1. Involved in amyloid-beta metabolism by catalyzing degradation of Amyloid-beta protein 40 and Amyloid-beta protein 42 peptides, thereby preventing plaque formation. Catalyzes cleavage of cholecystokinin (maturation of Cholecystokinin-8 and Cholecystokinin-5) and Gonadoliberin-1 (both maturation and degradation) hormones. Degradation of hemoregulatory peptide N-acetyl-SDKP (AcSDKP) and amyloid-beta proteins is mediated by the N-terminal catalytic domain, while angiotensin I and cholecystokinin cleavage is mediated by the C-terminal catalytic region. In terms of biological role, soluble form that is released in blood plasma and other body fluids following proteolytic cleavage in the juxtamembrane stalk region. Isoform produced by alternative promoter usage that is specifically expressed in spermatocytes and adult testis, and which is required for male fertility. In contrast to somatic isoforms, only contains one catalytic domain. Acts as a dipeptidyl carboxypeptidase that removes dipeptides from the C-terminus of substrates. The identity of substrates that are needed for male fertility is unknown. Isoform Testis-specific and isoform Somatic have distinct activities and cannot completely compensate for the loss of the other when expressed in somatic tissues or testis. May also have a glycosidase activity which releases GPI-anchored proteins from the membrane by cleaving the mannose linkage in the GPI moiety. The GPIase activity was reported to be essential for the egg-binding ability of the sperm. This activity is however unclear and has been challenged by other groups, suggesting that it may be indirect. In Mus musculus (Mouse), this protein is Angiotensin-converting enzyme.